The following is a 349-amino-acid chain: Sterol-4-alpha-carboxylate 3-dehydrogenase ERG26, decarboxylating (349 aa).

NADP(+) contacts are provided by residues 11–17 (GGSGFLG), 62–63 (DL), and 84–86 (CAS). The substrate site is built by Ser124 and Tyr151. NADP(+) is bound by residues Tyr151, Lys155, and 179–182 (PAGI). Lys155 (proton donor) is an active-site residue.

Belongs to the 3-beta-HSD family. In terms of assembly, heterotetramer of ERG25, ERG26, ERG27 and ERG28. ERG28 acts as a scaffold to tether ERG27 and other 4,4-demethylation-related enzymes, forming a demethylation enzyme complex, in the endoplasmic reticulum.

The protein resides in the endoplasmic reticulum membrane. The catalysed reaction is 4beta-methylzymosterol-4alpha-carboxylate + NADP(+) = 3-dehydro-4-methylzymosterol + CO2 + NADPH. It functions in the pathway steroid biosynthesis; zymosterol biosynthesis; zymosterol from lanosterol: step 4/6. With respect to regulation, inhibited by FR171456, a natural product with broad antifungal activity. Sterol-4-alpha-carboxylate 3-dehydrogenase; part of the third module of ergosterol biosynthesis pathway that includes the late steps of the pathway. ERG26 is a catalytic component of the C-4 demethylation complex that catalyzes the oxidative decarboxylation that results in a reduction of the 3-beta-hydroxy group at the C-3 carbon to an oxo group. The third module or late pathway involves the ergosterol synthesis itself through consecutive reactions that mainly occur in the endoplasmic reticulum (ER) membrane. Firstly, the squalene synthase ERG9 catalyzes the condensation of 2 farnesyl pyrophosphate moieties to form squalene, which is the precursor of all steroids. Squalene synthase is crucial for balancing the incorporation of farnesyl diphosphate (FPP) into sterol and nonsterol isoprene synthesis. Secondly, the squalene epoxidase ERG1 catalyzes the stereospecific oxidation of squalene to (S)-2,3-epoxysqualene, which is considered to be a rate-limiting enzyme in steroid biosynthesis. Then, the lanosterol synthase ERG7 catalyzes the cyclization of (S)-2,3 oxidosqualene to lanosterol, a reaction that forms the sterol core. In the next steps, lanosterol is transformed to zymosterol through a complex process involving various demethylation, reduction and desaturation reactions. The lanosterol 14-alpha-demethylase ERG11 (also known as CYP51) catalyzes C14-demethylation of lanosterol to produce 4,4'-dimethyl cholesta-8,14,24-triene-3-beta-ol, which is critical for ergosterol biosynthesis. The C-14 reductase ERG24 reduces the C14=C15 double bond of 4,4-dimethyl-cholesta-8,14,24-trienol to produce 4,4-dimethyl-cholesta-8,24-dienol. 4,4-dimethyl-cholesta-8,24-dienol is substrate of the C-4 demethylation complex ERG25-ERG26-ERG27 in which ERG25 catalyzes the three-step monooxygenation required for the demethylation of 4,4-dimethyl and 4alpha-methylsterols, ERG26 catalyzes the oxidative decarboxylation that results in a reduction of the 3-beta-hydroxy group at the C-3 carbon to an oxo group, and ERG27 is responsible for the reduction of the keto group on the C-3. ERG28 has a role as a scaffold to help anchor ERG25, ERG26 and ERG27 to the endoplasmic reticulum and ERG29 regulates the activity of the iron-containing C4-methylsterol oxidase ERG25. Then, the sterol 24-C-methyltransferase ERG6 catalyzes the methyl transfer from S-adenosyl-methionine to the C-24 of zymosterol to form fecosterol. The C-8 sterol isomerase ERG2 catalyzes the reaction which results in unsaturation at C-7 in the B ring of sterols and thus converts fecosterol to episterol. The sterol-C5-desaturase ERG3 then catalyzes the introduction of a C-5 double bond in the B ring to produce 5-dehydroepisterol. The C-22 sterol desaturase ERG5 further converts 5-dehydroepisterol into ergosta-5,7,22,24(28)-tetraen-3beta-ol by forming the C-22(23) double bond in the sterol side chain. Finally, ergosta-5,7,22,24(28)-tetraen-3beta-ol is substrate of the C-24(28) sterol reductase ERG4 to produce ergosterol. The chain is Sterol-4-alpha-carboxylate 3-dehydrogenase ERG26, decarboxylating from Saccharomyces cerevisiae (strain ATCC 204508 / S288c) (Baker's yeast).